Here is a 185-residue protein sequence, read N- to C-terminus: Ribosome-recycling factor (185 aa).

The protein belongs to the RRF family.

The protein localises to the cytoplasm. Functionally, responsible for the release of ribosomes from messenger RNA at the termination of protein biosynthesis. May increase the efficiency of translation by recycling ribosomes from one round of translation to another. The polypeptide is Ribosome-recycling factor (Corynebacterium urealyticum (strain ATCC 43042 / DSM 7109)).